The following is a 356-amino-acid chain: NADH-quinone oxidoreductase subunit H (356 aa).

8 helical membrane-spanning segments follow: residues 18-38 (IIMI…IAYI), 87-107 (GVFL…WAVI), 120-140 (VGIL…IMAG), 166-186 (IGFV…SAVV), 205-225 (ILNW…VSAL), 265-285 (AITT…LPPI), 292-312 (WVPG…LIAM), and 333-353 (FLPL…FAGI).

Belongs to the complex I subunit 1 family. In terms of assembly, NDH-1 is composed of 14 different subunits. Subunits NuoA, H, J, K, L, M, N constitute the membrane sector of the complex.

The protein resides in the cell inner membrane. It catalyses the reaction a quinone + NADH + 5 H(+)(in) = a quinol + NAD(+) + 4 H(+)(out). Functionally, NDH-1 shuttles electrons from NADH, via FMN and iron-sulfur (Fe-S) centers, to quinones in the respiratory chain. The immediate electron acceptor for the enzyme in this species is believed to be ubiquinone. Couples the redox reaction to proton translocation (for every two electrons transferred, four hydrogen ions are translocated across the cytoplasmic membrane), and thus conserves the redox energy in a proton gradient. This subunit may bind ubiquinone. The polypeptide is NADH-quinone oxidoreductase subunit H (Bradyrhizobium sp. (strain ORS 278)).